The sequence spans 88 residues: Auxin-responsive protein SAUR21 (88 aa).

It belongs to the ARG7 family.

The protein localises to the cell membrane. Functions as a positive effector of cell expansion through modulation of auxin transport. The protein is Auxin-responsive protein SAUR21 of Arabidopsis thaliana (Mouse-ear cress).